A 311-amino-acid polypeptide reads, in one-letter code: Ketoisovalerate oxidoreductase subunit VorB (311 aa).

As to quaternary structure, heterotetramer of one alpha, one beta, one delta and one gamma chain.

It carries out the reaction 3-methyl-2-oxobutanoate + 2 oxidized [2Fe-2S]-[ferredoxin] + CoA = 2-methylpropanoyl-CoA + 2 reduced [2Fe-2S]-[ferredoxin] + CO2 + H(+). The protein is Ketoisovalerate oxidoreductase subunit VorB (vorB) of Pyrococcus abyssi (strain GE5 / Orsay).